A 178-amino-acid chain; its full sequence is MNKRTSVDASKEDLHPADPQSGEGVPPNRKNTKTSPRGEGTAPPFSARPCVWTLCEMLSILALVGVLHPFYRSNNQVYQKLKTHLRCQSSRVDGLMLKPTLLTPSQLKSPEGHLILPTFNHLVIRHILDPKQIFCVADVCTDCKFNCGSIERHQKRHLMRVSQDWEHLIRYRNQICLS.

Positions 1–16 (MNKRTSVDASKEDLHP) are enriched in basic and acidic residues. Positions 1-43 (MNKRTSVDASKEDLHPADPQSGEGVPPNRKNTKTSPRGEGTAP) are disordered.

This is an uncharacterized protein from Homo sapiens (Human).